A 130-amino-acid polypeptide reads, in one-letter code: Large ribosomal subunit protein eL32 (130 aa).

This sequence belongs to the eukaryotic ribosomal protein eL32 family. As to quaternary structure, part of the 50S ribosomal subunit.

This is Large ribosomal subunit protein eL32 from Pyrococcus furiosus (strain ATCC 43587 / DSM 3638 / JCM 8422 / Vc1).